Here is a 331-residue protein sequence, read N- to C-terminus: Tetraspanin-10 (331 aa).

The disordered stretch occupies residues 1-34; the sequence is MKEEECSPLLSQDTAGREHPLTRNSPPTANIPCP. Over 1–76 the chain is Cytoplasmic; that stretch reads MKEEECSPLL…LSTGSNCVKY (76 aa). A helical transmembrane segment spans residues 77–97; it reads LIFLSNFLFSLPSLLALAAGL. Residues 98 to 120 lie on the Extracellular side of the membrane; the sequence is WGLTVKRSQGIGWGGPVPTDPML. The helical transmembrane segment at 121–141 threads the bilayer; that stretch reads MLVLGGLVVSVVSLSGCLGAF. The Cytoplasmic segment spans residues 142–152; it reads CENSCLLHWYC. The helical transmembrane segment at 153-173 threads the bilayer; that stretch reads GAVLFCLALEALAGVLMVTLW. Topologically, residues 174 to 331 are extracellular; it reads KPLQDSLKYT…AAEDIEAGPL (158 aa). Disulfide bonds link C210–C277, C211–C241, C227–C235, and C242–C256. N-linked (GlcNAc...) asparagine glycosylation occurs at N226.

Belongs to the tetraspanin (TM4SF) family. Interacts with ADAM10.

The protein resides in the cell membrane. Part of TspanC8 subgroup, composed of 6 members that interact with the transmembrane metalloprotease ADAM10. This interaction is required for ADAM10 exit from the endoplasmic reticulum and for enzymatic maturation and trafficking to the cell surface as well as substrate specificity. Different TspanC8/ADAM10 complexes have distinct substrates. This chain is Tetraspanin-10 (Tspan10), found in Mus musculus (Mouse).